The chain runs to 207 residues: Large ribosomal subunit protein uL4 (207 aa).

The interval 44 to 77 (RRQGTHDTKTRSEVRGGGRKPWRQKGTGRARHGT) is disordered. Basic and acidic residues predominate over residues 47-59 (GTHDTKTRSEVRG). The span at 60–77 (GGRKPWRQKGTGRARHGT) shows a compositional bias: basic residues.

Belongs to the universal ribosomal protein uL4 family. As to quaternary structure, part of the 50S ribosomal subunit.

In terms of biological role, one of the primary rRNA binding proteins, this protein initially binds near the 5'-end of the 23S rRNA. It is important during the early stages of 50S assembly. It makes multiple contacts with different domains of the 23S rRNA in the assembled 50S subunit and ribosome. Forms part of the polypeptide exit tunnel. This Desulforudis audaxviator (strain MP104C) protein is Large ribosomal subunit protein uL4.